We begin with the raw amino-acid sequence, 217 residues long: ATP-dependent Clp protease proteolytic subunit 1 (217 aa).

The disordered stretch occupies residues 1–24 (MTPLTTGWHPALSPRAEEGDTPPS). Ser108 (nucleophile) is an active-site residue. Residue His133 is part of the active site.

This sequence belongs to the peptidase S14 family. In terms of assembly, fourteen ClpP subunits assemble into 2 heptameric rings which stack back to back to give a disk-like structure with a central cavity, resembling the structure of eukaryotic proteasomes.

Its subcellular location is the cytoplasm. The catalysed reaction is Hydrolysis of proteins to small peptides in the presence of ATP and magnesium. alpha-casein is the usual test substrate. In the absence of ATP, only oligopeptides shorter than five residues are hydrolyzed (such as succinyl-Leu-Tyr-|-NHMec, and Leu-Tyr-Leu-|-Tyr-Trp, in which cleavage of the -Tyr-|-Leu- and -Tyr-|-Trp bonds also occurs).. Functionally, cleaves peptides in various proteins in a process that requires ATP hydrolysis. Has a chymotrypsin-like activity. Plays a major role in the degradation of misfolded proteins. In Streptomyces avermitilis (strain ATCC 31267 / DSM 46492 / JCM 5070 / NBRC 14893 / NCIMB 12804 / NRRL 8165 / MA-4680), this protein is ATP-dependent Clp protease proteolytic subunit 1.